A 283-amino-acid polypeptide reads, in one-letter code: Acyl-coenzyme A diphosphatase FITM2 (283 aa).

Residues 1–11 (MSTRRSSTRAD) are compositionally biased toward low complexity. The interval 1–21 (MSTRRSSTRADSTTKRPASPN) is disordered. Topologically, residues 1–39 (MSTRRSSTRADSTTKRPASPNSTPNAALGIFVAIARQIL) are cytoplasmic. Residues 40–60 (FIDARKVALFYLAFVTVLSFI) form a helical membrane-spanning segment. The Lumenal segment spans residues 61–81 (ESRIELDSTYYLVQKHSVLNQ). A helical transmembrane segment spans residues 82–102 (YGVKMGWFWTLVIVGPFIWFS). Topologically, residues 103–120 (SKAHNRRDRDQPIVDVCR) are cytoplasmic. Residues 121–141 (LGVGTACWYFSVQFFHKVLAL) form a helical membrane-spanning segment. The Lumenal segment spans residues 142 to 168 (TSMCDKGRTLTRAQCSEKEGVWTPGYD). A helical transmembrane segment spans residues 169 to 189 (ISGHCFLMIYSILIITEEAIA). H172 is a catalytic residue. Residues 190 to 219 (YRHYQQVTDAVHQMDGDREEHDRLTRCIQY) are Cytoplasmic-facing. 2 consecutive transmembrane segments (helical) span residues 220 to 240 (FFVA…ISVL) and 241 to 261 (YYHI…CWFV). H243 is a catalytic residue. Residues 262-283 (TYRMLYPAGFLASPIRRTVGRK) lie on the Cytoplasmic side of the membrane.

This sequence belongs to the FIT family. FIT2 subfamily.

The protein resides in the endoplasmic reticulum membrane. It carries out the reaction an acyl-CoA + H2O = an acyl-4'-phosphopantetheine + adenosine 3',5'-bisphosphate + 2 H(+). Functionally, fatty acyl-coenzyme A (CoA) diphosphatase that hydrolyzes fatty acyl-CoA to yield acyl-4'-phosphopantetheine and adenosine 3',5'-bisphosphate. Preferentially hydrolyzes unsaturated long-chain acyl-CoA substrates in the endoplasmic reticulum (ER) lumen. This catalytic activity is required for maintaining ER structure and for lipid droplets (LDs) biogenesis, which are lipid storage organelles involved in maintaining lipid and energy homeostasis. May directly bind to diacylglycerol (DAGs) and triacylglycerol, which is also important for LD biogenesis. May support directional budding of nacent LDs from the ER into the cytosol by reducing DAG levels at sites of LD formation. May play a role in the regulation of cell morphology, ER morphology and cytoskeletal organization. This Caenorhabditis elegans protein is Acyl-coenzyme A diphosphatase FITM2.